The following is a 74-amino-acid chain: UPF0154 protein OB1676 (74 aa).

A helical membrane pass occupies residues 4–24 (IWVVLIAIAALVAGVALGFFI).

This sequence belongs to the UPF0154 family.

It is found in the membrane. The chain is UPF0154 protein OB1676 from Oceanobacillus iheyensis (strain DSM 14371 / CIP 107618 / JCM 11309 / KCTC 3954 / HTE831).